Here is a 123-residue protein sequence, read N- to C-terminus: Large ribosomal subunit protein uL29 (123 aa).

It belongs to the universal ribosomal protein uL29 family. As to quaternary structure, component of the large ribosomal subunit.

The protein localises to the cytoplasm. Functionally, component of the large ribosomal subunit. The ribosome is a large ribonucleoprotein complex responsible for the synthesis of proteins in the cell. The protein is Large ribosomal subunit protein uL29 (rpl35) of Xenopus tropicalis (Western clawed frog).